We begin with the raw amino-acid sequence, 745 residues long: Copper-transporting ATPase (745 aa).

One can recognise an HMA domain in the interval 1–67 (MKESFYIEGM…LIEKLGYSPK (67 aa)). Topologically, residues 1 to 83 (MKESFYIEGM…KKEFFSPNVK (83 aa)) are cytoplasmic. Cys12 and Cys15 together coordinate Cu cation. Residues 84–104 (LALAVIFTLFVVYLSMGAMLS) form a helical membrane-spanning segment. Residues 105–124 (PSLLPESLLAINNHSNFLNA) lie on the Extracellular side of the membrane. Residues 125-144 (CLQLIGALIVMHLGRDFYIQ) traverse the membrane as a helical segment. At 145 to 151 (GFKALWH) the chain is on the cytoplasmic side. Residues 152-172 (RQPNMSSLIAIGTSAALISSL) traverse the membrane as a helical segment. Residues 173–194 (WQLYLVYTNHYTDQWSYGHYYF) lie on the Extracellular side of the membrane. Residues 195-215 (ESVCVILMFVMVGKRIENVSK) form a helical membrane-spanning segment. The Cytoplasmic segment spans residues 216–343 (DKALDAMQAL…KAEISRLADK (128 aa)). The chain crosses the membrane as a helical span at residues 344 to 366 (VSSVFVPSVIAIAILAFVVWLII). Topologically, residues 367 to 379 (APKPDFWWNFGIA) are extracellular. The chain crosses the membrane as a helical span at residues 380–397 (LEVFVSVLVISCPCALGL). The Cytoplasmic portion of the chain corresponds to 398 to 685 (ATPMSILVAN…KLSQATIKNI (288 aa)). Asp435 acts as the 4-aspartylphosphate intermediate in catalysis. 2 residues coordinate Mg(2+): Asp631 and Asp635. A helical transmembrane segment spans residues 686 to 705 (KENLFWAFCYNSVFIPLACG). The Extracellular portion of the chain corresponds to 706–716 (VLYKANIMLSP). A helical transmembrane segment spans residues 717-735 (AIAGLAMSLSSVSVVLNSQ). Topologically, residues 736–745 (RLRNFKIKDH) are cytoplasmic.

The protein belongs to the cation transport ATPase (P-type) (TC 3.A.3) family. Type IB subfamily.

It localises to the cell membrane. The enzyme catalyses Cu(2+)(in) + ATP + H2O = Cu(2+)(out) + ADP + phosphate + H(+). Functionally, probably involved in copper export. The protein is Copper-transporting ATPase (copA) of Helicobacter pylori (Campylobacter pylori).